Reading from the N-terminus, the 590-residue chain is Aspartate--tRNA(Asp/Asn) ligase (590 aa).

An L-aspartate-binding site is contributed by glutamate 175. An aspartate region spans residues 199–202 (QQYK). L-aspartate is bound by residues arginine 221 and histidine 450. 221-223 (RDE) provides a ligand contact to ATP. Glutamate 484 is a binding site for ATP. An L-aspartate-binding site is contributed by arginine 491. 536-539 (GVDR) lines the ATP pocket.

Belongs to the class-II aminoacyl-tRNA synthetase family. Type 1 subfamily. Homodimer.

It is found in the cytoplasm. The catalysed reaction is tRNA(Asx) + L-aspartate + ATP = L-aspartyl-tRNA(Asx) + AMP + diphosphate. In terms of biological role, aspartyl-tRNA synthetase with relaxed tRNA specificity since it is able to aspartylate not only its cognate tRNA(Asp) but also tRNA(Asn). Reaction proceeds in two steps: L-aspartate is first activated by ATP to form Asp-AMP and then transferred to the acceptor end of tRNA(Asp/Asn). The sequence is that of Aspartate--tRNA(Asp/Asn) ligase from Rhodopseudomonas palustris (strain BisB5).